A 372-amino-acid polypeptide reads, in one-letter code: Methenyltetrahydrofolate synthase domain-containing protein (372 aa).

Residues 246 to 258 (KQAGKDVTLRDEP) are compositionally biased toward basic and acidic residues. The interval 246–289 (KQAGKDVTLRDEPGSQQPAPGPIRRPQDRPQTGSRGGSRSPLQG) is disordered. The region spanning 296 to 369 (ATVCVGNLPF…NALRVSLGQQ (74 aa)) is the RRM domain.

The sequence is that of Methenyltetrahydrofolate synthase domain-containing protein (Mthfsd) from Mus musculus (Mouse).